Consider the following 422-residue polypeptide: L-cysteine:1D-myo-inositol 2-amino-2-deoxy-alpha-D-glucopyranoside ligase (422 aa).

Residues 1-34 are disordered; sequence MKSWSTPAPPTVPSRPDRLRLHDTATGRTRHPGN. The segment covering 15–25 has biased composition (basic and acidic residues); sequence RPDRLRLHDTA. C44 is a binding site for Zn(2+). L-cysteinyl-5'-AMP-binding positions include 44–47, T59, and 82–84; these read CGIT and NVT. The 'HIGH' region motif lies at 46–56; that stretch reads ITPYDATHLGH. The short motif at 196–201 is the 'ERGGDP' region element; it reads ERGGDP. An L-cysteinyl-5'-AMP-binding site is contributed by W237. Zn(2+) is bound at residue C241. 259-261 provides a ligand contact to L-cysteinyl-5'-AMP; the sequence is GSD. H266 contributes to the Zn(2+) binding site. V292 is an L-cysteinyl-5'-AMP binding site. Residues 298–302 carry the 'KMSKS' region motif; sequence KMSKS.

Belongs to the class-I aminoacyl-tRNA synthetase family. MshC subfamily. Monomer. Requires Zn(2+) as cofactor.

The enzyme catalyses 1D-myo-inositol 2-amino-2-deoxy-alpha-D-glucopyranoside + L-cysteine + ATP = 1D-myo-inositol 2-(L-cysteinylamino)-2-deoxy-alpha-D-glucopyranoside + AMP + diphosphate + H(+). Functionally, catalyzes the ATP-dependent condensation of GlcN-Ins and L-cysteine to form L-Cys-GlcN-Ins. The chain is L-cysteine:1D-myo-inositol 2-amino-2-deoxy-alpha-D-glucopyranoside ligase from Micrococcus luteus (strain ATCC 4698 / DSM 20030 / JCM 1464 / CCM 169 / CCUG 5858 / IAM 1056 / NBRC 3333 / NCIMB 9278 / NCTC 2665 / VKM Ac-2230) (Micrococcus lysodeikticus).